A 378-amino-acid chain; its full sequence is Probable serine/threonine-protein kinase PBL7 (378 aa).

The tract at residues 1–49 is disordered; sequence MGWIPCSGKSSGRNKTRRNGDHKLDRKSSDCSVSTSEKSRAKSSLSESK. Gly-2 carries the N-myristoyl glycine lipid modification. Residues 18 to 29 show a composition bias toward basic and acidic residues; sequence RNGDHKLDRKSS. The segment covering 32 to 47 has biased composition (low complexity); that stretch reads SVSTSEKSRAKSSLSE. A Phosphothreonine modification is found at Thr-62. The Protein kinase domain maps to 73–350; sequence FRKECLIGEG…ADVVTALSYL (278 aa). ATP-binding positions include 79-87 and Lys-102; that span reads IGEGGFGRV. Phosphotyrosine is present on Tyr-147. The active-site Proton acceptor is the Asp-200. A phosphoserine mark is found at Ser-204 and Ser-234. 2 positions are modified to phosphothreonine: Thr-235 and Thr-240. The residue at position 248 (Tyr-248) is a Phosphotyrosine.

The protein belongs to the protein kinase superfamily. Ser/Thr protein kinase family. As to quaternary structure, interacts with BSU1 and BSL1. Phosphorylated at Ser-43, Ser-46 and Ser-234. Widely expressed.

Its subcellular location is the cell membrane. It carries out the reaction L-seryl-[protein] + ATP = O-phospho-L-seryl-[protein] + ADP + H(+). The catalysed reaction is L-threonyl-[protein] + ATP = O-phospho-L-threonyl-[protein] + ADP + H(+). Serine/threonine-protein kinase involved in the positive regulation of brassinosteroid (BR) signaling and plant growth. Phosphorylates both BSU1 and BSL1 in vitro. In Arabidopsis thaliana (Mouse-ear cress), this protein is Probable serine/threonine-protein kinase PBL7.